Here is a 454-residue protein sequence, read N- to C-terminus: Protein pid-2 (454 aa).

Residues V31–K61 form a disordered region. The segment covering K50–K61 has biased composition (basic and acidic residues).

In terms of assembly, may interact with pid-4, pid-5, app-1 and prmt-5. As to expression, expressed throughout the mitotic and meiotic regions of the germline and in oocytes.

It localises to the cytoplasm. The protein resides in the perinuclear region. The protein localises to the cytoplasmic granule. Its function is as follows. Involved in gene silencing mediated by a class of 21 nucleotide PIWI-interacting RNAs (piRNAs) that possess a uracil residue at the 5'-end (also called 21U-RNAs) and that guide the Piwi protein prg-1 to its DNA targets for silencing. Not required for the biogenesis of 21U-RNAs. May also be involved in gene silencing mediated by 22G-siRNAs (a class of 22 nucleotide endogenous small interfering RNAs (siRNAs) that possess a triphosphorylated guanine residue at the 5'-end) and 26G-siRNAs (a class of 26 nucleotide siRNAs that possess a guanine residue at the 5'-end). Required for the biogenesis of secondary and tertiary 22G-siRNAs from many loci. Specifically, promotes the production of 22G-siRNAs from the 5' end of target mRNAs. May play a role in the production of 26G-siRNAs. Plays a role in small RNA-directed transgenerational epigenetic inheritance (also called RNAe) over several generations and germline immortality. Together with the argonaut protein hrde-1, promotes the silencing of the DNA transposable element Tc1. Required for the formation of liquid-like condensates in the cytoplasm called Z granules, playing a role in maintaining their assembly, viscosity and morphology in adult germ cells, and localization in early embryos. In Caenorhabditis elegans, this protein is Protein pid-2.